A 264-amino-acid chain; its full sequence is Phycocyanobilin:ferredoxin oxidoreductase (264 aa).

The protein belongs to the HY2 family.

The catalysed reaction is (2R,3Z)-phycocyanobilin + 4 oxidized [2Fe-2S]-[ferredoxin] = biliverdin IXalpha + 4 reduced [2Fe-2S]-[ferredoxin] + 4 H(+). Catalyzes the four-electron reduction of biliverdin IX-alpha (2-electron reduction at both the A and D rings); the reaction proceeds via an isolatable 2-electron intermediate, 181,182-dihydrobiliverdin. This is Phycocyanobilin:ferredoxin oxidoreductase from Prochlorococcus marinus (strain MIT 9303).